The chain runs to 412 residues: WW domain-containing oxidoreductase (412 aa).

The tract at residues 1–24 (MAALKYAGMEDTDSEDELPPGWEE) is disordered. Residues 16 to 49 (DELPPGWEERSTKDGWVYYANHEEMKTQWEHPKT) enclose the WW 1 domain. The short motif at 50–55 (GKKKRC) is the Nuclear localization signal element. Positions 57–90 (GALPYGWEQETDDKGQIFYVDHINKRKTYFDPRQ) constitute a WW 2 domain. NADP(+) is bound at residue 128–134 (GANSGIG). Ser-257 provides a ligand contact to substrate. Residue Tyr-290 is the Proton acceptor of the active site.

This sequence belongs to the short-chain dehydrogenases/reductases (SDR) family.

Its subcellular location is the cytoplasm. The protein resides in the mitochondrion. It is found in the golgi apparatus. The protein localises to the lysosome. Putative oxidoreductase. Acts as a tumor suppressor and plays a role in apoptosis. May function synergistically with p53/TP53 to control genotoxic stress-induced cell death. Plays a role in TGFB1 signaling and TGFB1-mediated cell death. May also play a role in tumor necrosis factor (TNF)-mediated cell death. Required for normal bone development. Inhibits Wnt signaling. The protein is WW domain-containing oxidoreductase (wwox) of Danio rerio (Zebrafish).